The primary structure comprises 292 residues: Diaminopimelate epimerase (292 aa).

Asn13, Gln46, and Asn66 together coordinate substrate. Cys75 functions as the Proton donor in the catalytic mechanism. Substrate-binding positions include Gly76–Asn77, Asn166, Asn199, and Glu217–Arg218. The Proton acceptor role is filled by Cys226. Gly227–Thr228 lines the substrate pocket.

The protein belongs to the diaminopimelate epimerase family. As to quaternary structure, homodimer.

The protein localises to the cytoplasm. It carries out the reaction (2S,6S)-2,6-diaminopimelate = meso-2,6-diaminopimelate. It functions in the pathway amino-acid biosynthesis; L-lysine biosynthesis via DAP pathway; DL-2,6-diaminopimelate from LL-2,6-diaminopimelate: step 1/1. In terms of biological role, catalyzes the stereoinversion of LL-2,6-diaminopimelate (L,L-DAP) to meso-diaminopimelate (meso-DAP), a precursor of L-lysine and an essential component of the bacterial peptidoglycan. This is Diaminopimelate epimerase from Ralstonia pickettii (strain 12J).